Reading from the N-terminus, the 82-residue chain is Protein transport protein SBH1 (82 aa).

Residues 1–36 (MSSPTPPGGQRTLQKRKQGSSQKVAASAPKKNTNSN) are disordered. Residues 1–53 (MSSPTPPGGQRTLQKRKQGSSQKVAASAPKKNTNSNNSILKIYSDEATGLRVD) lie on the Cytoplasmic side of the membrane. A compositionally biased stretch (polar residues) spans 19–36 (GSSQKVAASAPKKNTNSN). The helical transmembrane segment at 54-74 (PLVVLFLAVGFIFSVVALHVI) threads the bilayer.

Belongs to the SEC61-beta family. As to quaternary structure, component of the heterotrimeric Sec61 complex, which is composed of SSH1, SBH1 and SSS1. Presumably three to four Sec61 heterotrimers assemble into an oligomeric ring with a central aqueous pore. In cotranslational ER import, the pore diameter varies from 9-15 A in a ribosome-free resting state to 40-60 A in a functional state when associated with the ribosome. The Sec61 complex is part of a channel-forming translocon complex whose composition seem to change dependent upon different functional states. During post-translational ER import the Sec61 complex associates with the Sec62/63 complex to form the Sec complex. SBH1 interacts OST2, OST4 and WBP1 components of the OT complex.

Its subcellular location is the endoplasmic reticulum membrane. In terms of biological role, part of the Sec61 complex, which is the major component of a channel-forming translocon complex that mediates protein translocation across the endoplasmic reticulum (ER). The functional states of the translocon complex include co- and post-translational ER import, cotranslational membrane protein integration and retrograde transport of misfolded proteins out of the ER. In the cotranslational pathway, ribosomes synthesizing presecretory proteins are targeted to the translocon by the cytosolic signal recognition particle (SRP) and its ER-localized receptor. The association of the Sec61 complex with the ribosome is mediated by the 28S rRNA of the large ribosomal subunit. SRP-independent post-translational translocation requires the association of additional factors, such as the Sec62/63 complex and KAR2. The polypeptide is Protein transport protein SBH1 (SBH1) (Saccharomyces cerevisiae (strain ATCC 204508 / S288c) (Baker's yeast)).